A 343-amino-acid polypeptide reads, in one-letter code: Anthranilate phosphoribosyltransferase (343 aa).

5-phospho-alpha-D-ribose 1-diphosphate-binding positions include G83, 86-87 (GD), T91, 93-96 (NIST), 111-119 (KHGGRSVSS), and S123. Anthranilate is bound at residue G83. S95 contributes to the Mg(2+) binding site. Residue R169 participates in anthranilate binding. Mg(2+)-binding residues include D228 and E229.

It belongs to the anthranilate phosphoribosyltransferase family. Homodimer. Requires Mg(2+) as cofactor.

The enzyme catalyses N-(5-phospho-beta-D-ribosyl)anthranilate + diphosphate = 5-phospho-alpha-D-ribose 1-diphosphate + anthranilate. It functions in the pathway amino-acid biosynthesis; L-tryptophan biosynthesis; L-tryptophan from chorismate: step 2/5. In terms of biological role, catalyzes the transfer of the phosphoribosyl group of 5-phosphorylribose-1-pyrophosphate (PRPP) to anthranilate to yield N-(5'-phosphoribosyl)-anthranilate (PRA). The chain is Anthranilate phosphoribosyltransferase from Thiobacillus denitrificans (strain ATCC 25259 / T1).